The sequence spans 120 residues: PE family protein PE10 (120 aa).

Positions glycine 29–aspartate 59 are disordered. The segment covering serine 40–serine 51 has biased composition (low complexity).

This sequence belongs to the mycobacterial PE family. As to quaternary structure, forms a complex with PE9. The complex interacts with human TLR4.

The protein localises to the secreted. The protein resides in the cell wall. Functionally, together with PE9, induces macrophage apoptosis through human Toll-like receptor 4 (TLR4) signaling pathway. Interaction with TLR4 leads to increased levels of phospho-IRF-3, increase in the transcript levels of IFN-beta and pro-apoptotic genes, up-regulation of IL-10, down-regulation of IL-1b and enhanced levels of macrophage apoptosis. In Mycobacterium tuberculosis (strain ATCC 25618 / H37Rv), this protein is PE family protein PE10.